The chain runs to 184 residues: MDTQKIEAAVKMIIEAVGEDANREGLQETPARVARMYQEIFSGLGQTAEEHLSKSFEIIDDNMVVEKDIFFHTMCEHHFLPFYGRAHIAYIPDGRVAGLSKLARTVEVYSKKPQIQERLNIEVADALMEYLGAKGAFVVIEAEHMCMSMRGVRKPGTATLTTVARGLFETDKDLRDQAYRLMGL.

Cys75, His78, and Cys146 together coordinate Zn(2+).

The protein belongs to the GTP cyclohydrolase I family. As to quaternary structure, homomer.

It catalyses the reaction GTP + H2O = 7,8-dihydroneopterin 3'-triphosphate + formate + H(+). Its pathway is cofactor biosynthesis; 7,8-dihydroneopterin triphosphate biosynthesis; 7,8-dihydroneopterin triphosphate from GTP: step 1/1. The sequence is that of GTP cyclohydrolase 1 from Streptococcus pneumoniae (strain ATCC 700669 / Spain 23F-1).